The sequence spans 171 residues: Transcription antitermination protein NusB (171 aa).

It belongs to the NusB family.

Functionally, involved in transcription antitermination. Required for transcription of ribosomal RNA (rRNA) genes. Binds specifically to the boxA antiterminator sequence of the ribosomal RNA (rrn) operons. This Brucella suis (strain ATCC 23445 / NCTC 10510) protein is Transcription antitermination protein NusB.